Consider the following 459-residue polypeptide: Mitochondrial distribution and morphology protein 34 (459 aa).

Residues 1–190 (MSFRFNEAVF…LPSLIFNTSQ (190 aa)) enclose the SMP-LTD domain. Residues 338-347 (RSNSNDDNAK) are compositionally biased toward basic and acidic residues. Residues 338–375 (RSNSNDDNAKPRRRKIKCKKTRTPSNLQSQGEQAVDDS) are disordered. Residues 348-359 (PRRRKIKCKKTR) show a composition bias toward basic residues.

This sequence belongs to the MDM34 family. In terms of assembly, component of the ER-mitochondria encounter structure (ERMES) or MDM complex, composed of MMM1, MDM10, MDM12 and MDM34. Post-translationally, ubiquitinated by a SCF (SKP1-CUL1-F-box protein) E3 ubiquitin-protein ligase complex containing the F-box protein MDM30. Ubiquitination is important for mitochondrial integrity.

The protein localises to the mitochondrion outer membrane. Functionally, component of the ERMES/MDM complex, which serves as a molecular tether to connect the endoplasmic reticulum (ER) and mitochondria. Components of this complex are involved in the control of mitochondrial shape and protein biogenesis, and function in nonvesicular lipid trafficking between the ER and mitochondria. MDM34 is required for the interaction of the ER-resident membrane protein MMM1 and the outer mitochondrial membrane-resident beta-barrel protein MDM10. The chain is Mitochondrial distribution and morphology protein 34 from Saccharomyces cerevisiae (strain AWRI1631) (Baker's yeast).